We begin with the raw amino-acid sequence, 752 residues long: Probable cell surface ferric reductase kap2 (752 aa).

Residues Gly-40–Ile-60 traverse the membrane as a helical segment. 2 N-linked (GlcNAc...) asparagine glycosylation sites follow: Asn-118 and Asn-133. 2 helical membrane-spanning segments follow: residues Ile-157–Leu-177 and Pro-195–Leu-215. The Ferric oxidoreductase domain maps to Ala-201–Ser-348. The heme site is built by His-237 and His-251. 3 helical membrane-spanning segments follow: residues Gly-241 to Trp-261, Gly-281 to Leu-301, and Tyr-306 to Trp-326. Residues His-313 and His-327 each coordinate heme. Residues Phe-331–Val-351 form a helical membrane-spanning segment. Residues Tyr-349–Asp-475 form the FAD-binding FR-type domain. Asn-357 carries N-linked (GlcNAc...) asparagine glycosylation. An NADP(+)-binding site is contributed by Gly-467–Gly-470. The helical transmembrane segment at Val-482–Ile-502 threads the bilayer. The N-linked (GlcNAc...) asparagine glycan is linked to Asn-627. Residue Cys-714–Gly-715 coordinates NADP(+).

The protein belongs to the ferric reductase (FRE) family. It depends on FAD as a cofactor. Requires heme as cofactor.

Its subcellular location is the cell membrane. It catalyses the reaction 2 a Fe(II)-siderophore + NADP(+) + H(+) = 2 a Fe(III)-siderophore + NADPH. In terms of biological role, probable cell surface ferric reductase that acts as a negative regulatory factor of growth and development. Involved in kojic acid production through the regulation of kojA expression. The chain is Probable cell surface ferric reductase kap2 from Aspergillus oryzae (strain ATCC 42149 / RIB 40) (Yellow koji mold).